Here is a 528-residue protein sequence, read N- to C-terminus: DNA primase large subunit (528 aa).

The segment at 210–239 (NEEHQRKQYFQQEKFIKLPFENVIELVGNR) is H-T-H-like motif. [4Fe-4S] cluster contacts are provided by C336, C417, C434, and C474.

Belongs to the eukaryotic-type primase large subunit family. As to quaternary structure, DNA polymerase alpha:primase is a four subunit enzyme complex, which is assembled throughout the cell cycle, and consists of the two DNA polymerase subunits A POL1 and B POL12, and the DNA primase large PRI2 and small PRI1 subunits. Interacts with MCM10. It depends on [4Fe-4S] cluster as a cofactor.

DNA primase is the polymerase that synthesizes small RNA primers for the Okazaki fragments made during discontinuous DNA replication. In a complex with DNA polymerase alpha (DNA polymerase alpha:primase) constitutes a replicative polymerase. Both primase components participate in formation of the active center, but the ATP-binding site is exclusively located on p48. The sequence is that of DNA primase large subunit (PRI2) from Saccharomyces cerevisiae (strain ATCC 204508 / S288c) (Baker's yeast).